Reading from the N-terminus, the 358-residue chain is Peptide chain release factor 1 (358 aa).

Q235 carries the post-translational modification N5-methylglutamine.

The protein belongs to the prokaryotic/mitochondrial release factor family. In terms of processing, methylated by PrmC. Methylation increases the termination efficiency of RF1.

It is found in the cytoplasm. Functionally, peptide chain release factor 1 directs the termination of translation in response to the peptide chain termination codons UAG and UAA. The protein is Peptide chain release factor 1 of Neisseria gonorrhoeae (strain ATCC 700825 / FA 1090).